Consider the following 372-residue polypeptide: Adaptive-response sensory-kinase SasA (372 aa).

Residues 147–360 (MVAHELRTPL…CFHFTVPVWQ (214 aa)) enclose the Histidine kinase domain. His-150 bears the Phosphohistidine; by autocatalysis mark.

As to quaternary structure, homooligomerizes. Interacts with KaiC. Participates in the KaiBC complex, whose core is composed of a KaiC homohexamer and 6 KaiB.

The catalysed reaction is ATP + protein L-histidine = ADP + protein N-phospho-L-histidine.. Member of the two-component regulatory system SasA/RpaA involved in genome-wide circadian gene expression. One of several clock output pathways. Participates in the Kai clock protein complex, the main circadian regulator in cyanobacteria, via its interaction with KaiC. KaiC enhances the autophosphorylation activity of SasA, which then transfers its phosphate group to RpaA to activate it. In addition to its output function, recruits fold-shifted KaiB (KaiB(fs)) to KaiC to cooperatively form the KaiB(6):KaiC(6) complex (independent of SasA kinase activity). Required for robustness of the circadian rhythm of gene expression and is involved in clock output, also required for adaptation to light/dark cycles. The protein is Adaptive-response sensory-kinase SasA of Prochlorococcus marinus subsp. pastoris (strain CCMP1986 / NIES-2087 / MED4).